The sequence spans 2514 residues: Probable polyketide synthase 8/35 (2514 aa).

The Ketosynthase family 3 (KS3) domain maps to 11–442; the sequence is DKGVAIVGVG…GSNCCLLISE (432 aa). Active-site for beta-ketoacyl synthase activity residues include Cys181, His323, and His362. The segment at 635 to 668 is acyl/malonyl transferase; the sequence is GVNPSFILGHSLGEISAAYCSGMIDLDTFCYTVY. The active-site For acyl/malonyl transferase activity is Ser645. The segment at 925-1047 is N-terminal hotdog fold; it reads IDHLGLSNSY…ANFQLLDHGN (123 aa). One can recognise a PKS/mFAS DH domain in the interval 925-1209; sequence IDHLGLSNSY…FKSLIPIKHS (285 aa). The active-site Proton acceptor; for dehydratase activity is His959. A C-terminal hotdog fold region spans residues 1064-1209; sequence NLSKLTKNEL…FKSLIPIKHS (146 aa). Asp1122 functions as the Proton donor; for dehydratase activity in the catalytic mechanism. In terms of domain architecture, Carrier spans 2431–2508; it reads IGNKNIDELF…ISIKMILNSL (78 aa). Ser2468 carries the post-translational modification O-(pantetheine 4'-phosphoryl)serine.

Requires pantetheine 4'-phosphate as cofactor.

Its function is as follows. Probable polyketide synthase. The polypeptide is Probable polyketide synthase 8/35 (pks8) (Dictyostelium discoideum (Social amoeba)).